Reading from the N-terminus, the 519-residue chain is Dolichol kinase (519 aa).

Over 1–47 (MVAIIPHASFTTIKLTQKTEGSQMPTEEICKINMRTRKFDVGGNSRD) the chain is Cytoplasmic. Residues 48-68 (FECFYSNFVQTVILLGTFFYC) traverse the membrane as a helical segment. The Lumenal segment spans residues 69-88 (VERLQPWSIVTADISYKQIF). The chain crosses the membrane as a helical span at residues 89–109 (VNVFVVCLIMVGLIFTKYWQH). At 110-118 (GYKSLPKFD) the chain is on the cytoplasmic side. The chain crosses the membrane as a helical span at residues 119–139 (TIYSLYLPFMVSLLFDTSSTV). At 140-151 (INTILILSVLNS) the chain is on the lumenal side. The chain crosses the membrane as a helical span at residues 152–172 (YRWRTQLVVIILQLCLIFFNF). At 173 to 181 (EAGDRLKNI) the chain is on the cytoplasmic side. Residues 182–203 (ISIVINSLLSLILKYIGQLKSL) traverse the membrane as a helical segment. The Lumenal segment spans residues 204 to 223 (DNIDSNLFSILLTNILYVSE). The helical transmembrane segment at 224–244 (AGTVHFRILKGIILALTTIIS) threads the bilayer. At 245 to 253 (INYVLKKVM) the chain is on the cytoplasmic side. The chain crosses the membrane as a helical span at residues 254-274 (HFKPFMLSISFAIGLPLFANT). Topologically, residues 275–294 (FIHLEDGENPLLWLVKYILE) are lumenal. Residues 295-315 (STIRQKILFAWSSILILSIPS) form a helical membrane-spanning segment. Over 316–326 (ILIEKDSLSLN) the chain is Cytoplasmic. The helical transmembrane segment at 327–347 (TSRKLWHFIIFLLIIPSFQMD) threads the bilayer. At 348 to 349 (SN) the chain is on the lumenal side. Residues 350 to 370 (FVKIALSGTIPVFLSIEYIRF) form a helical membrane-spanning segment. The Cytoplasmic segment spans residues 371–394 (QNLPPLGSAIELQLRRFADDRDHS). The chain crosses the membrane as a helical span at residues 395–415 (GPLIISYLYLLFGISTPLLMN). At 416-417 (NS) the chain is on the lumenal side. A helical transmembrane segment spans residues 418–438 (PMGLIGLGIGDSLASIIGKRY). Topologically, residues 439-449 (GRIRWKGTQKT) are cytoplasmic. Residues 450-470 (LEGTLAFIVTSFIVCLVLLRF) form a helical membrane-spanning segment. At 471-472 (DK) the chain is on the lumenal side. The helical transmembrane segment at 473-493 (AAIFNHLTTLQLLTLCTLSGV) threads the bilayer. Topologically, residues 494 to 519 (LEGNSVLNDNILIPAFMMICEKLITL) are cytoplasmic.

This sequence belongs to the polyprenol kinase family.

Its subcellular location is the endoplasmic reticulum membrane. It carries out the reaction a di-trans,poly-cis-dolichol + CTP = a di-trans,poly-cis-dolichyl phosphate + CDP + H(+). It functions in the pathway protein modification; protein glycosylation. Its function is as follows. Catalyzes CTP-mediated phosphorylation of dolichol, the terminal step in de novo dolichyl monophosphate (Dol-P) biosynthesis. Dol-P is a lipid carrier essential for the synthesis of N-linked and O-linked oligosaccharides and for GPI anchors. The chain is Dolichol kinase (SEC59) from Saccharomyces cerevisiae (strain ATCC 204508 / S288c) (Baker's yeast).